The primary structure comprises 359 residues: Phospho-N-acetylmuramoyl-pentapeptide-transferase (359 aa).

The next 10 helical transmembrane spans lie at 3–23 (QILI…PALI), 55–75 (VAII…GLAF), 80–100 (ISAS…VGFL), 117–137 (TAKT…ALGF), 156–176 (IATV…VVSA), 187–207 (LDGL…LITF), 231–251 (LAIV…WNAA), 255–275 (IFMG…ISVT), 280–300 (ILAV…VLQI), and 334–354 (FWLL…GEWL).

Belongs to the glycosyltransferase 4 family. MraY subfamily. It depends on Mg(2+) as a cofactor.

It is found in the cell membrane. The catalysed reaction is UDP-N-acetyl-alpha-D-muramoyl-L-alanyl-gamma-D-glutamyl-meso-2,6-diaminopimeloyl-D-alanyl-D-alanine + di-trans,octa-cis-undecaprenyl phosphate = di-trans,octa-cis-undecaprenyl diphospho-N-acetyl-alpha-D-muramoyl-L-alanyl-D-glutamyl-meso-2,6-diaminopimeloyl-D-alanyl-D-alanine + UMP. It functions in the pathway cell wall biogenesis; peptidoglycan biosynthesis. In terms of biological role, catalyzes the initial step of the lipid cycle reactions in the biosynthesis of the cell wall peptidoglycan: transfers peptidoglycan precursor phospho-MurNAc-pentapeptide from UDP-MurNAc-pentapeptide onto the lipid carrier undecaprenyl phosphate, yielding undecaprenyl-pyrophosphoryl-MurNAc-pentapeptide, known as lipid I. This is Phospho-N-acetylmuramoyl-pentapeptide-transferase from Mycobacterium avium (strain 104).